Consider the following 89-residue polypeptide: Small ribosomal subunit protein uS14A (89 aa).

The protein belongs to the universal ribosomal protein uS14 family. As to quaternary structure, part of the 30S ribosomal subunit. Contacts proteins S3 and S10.

In terms of biological role, binds 16S rRNA, required for the assembly of 30S particles and may also be responsible for determining the conformation of the 16S rRNA at the A site. This Bacillus licheniformis (strain ATCC 14580 / DSM 13 / JCM 2505 / CCUG 7422 / NBRC 12200 / NCIMB 9375 / NCTC 10341 / NRRL NRS-1264 / Gibson 46) protein is Small ribosomal subunit protein uS14A.